The primary structure comprises 1547 residues: DNA topoisomerase 2 (1547 aa).

The interval 8–30 (FNKMSSPKQNGTGEPAPAKGQKG) is disordered. Over residues 9–19 (NKMSSPKQNGT) the composition is skewed to polar residues. ATP contacts are provided by residues Asn99, Asn128, 156–158 (SSN), and 169–176 (GRNGYGAK). An interaction with DNA region spans residues 351 to 353 (KKK). 385 to 387 (QTK) is a binding site for ATP. In terms of domain architecture, Toprim spans 463-580 (CTLILTEGDS…ELLKLPFLEE (118 aa)). The Mg(2+) site is built by Glu469, Asp549, and Asp551. The Topo IIA-type catalytic domain occupies 723-1192 (IPSMIDGLKP…TAPMLWREDL (470 aa)). Tyr813 functions as the O-(5'-phospho-DNA)-tyrosine intermediate in the catalytic mechanism. The segment at 996 to 1005 (KLQTTISMTC) is interaction with DNA. 4 disordered regions span residues 1107–1134 (TALEDDDAQESEEEEPEPDPKGKPVDPD), 1209–1249 (EELN…ISDD), 1261–1423 (KTRK…MDSD), and 1459–1547 (RQRR…SLSD). Positions 1109-1123 (LEDDDAQESEEEEPE) are enriched in acidic residues. Positions 1124–1134 (PDPKGKPVDPD) are enriched in basic and acidic residues. Basic residues predominate over residues 1216 to 1228 (KTSKAMAGKKNRK). Composition is skewed to basic and acidic residues over residues 1238–1249 (NGRRVEPKISDD) and 1294–1315 (EKPEKAEKPDKVDKAEKTDGLK). The span at 1331–1344 (TFSGSSSGEMSASD) shows a compositional bias: low complexity. The segment covering 1373–1383 (DDSGSDSEPEL) has biased composition (acidic residues). Basic and acidic residues-rich tracts occupy residues 1384-1394 (LDNKIDSDHEA) and 1459-1488 (RQRRCDTSVPPKEKAAPKRKLMNVDKDEKK). The segment covering 1513–1528 (KGKKKTAANPKKKAKK) has biased composition (basic residues). The span at 1537–1547 (DFNISDSSLSD) shows a compositional bias: polar residues.

It belongs to the type II topoisomerase family. In terms of assembly, homodimer. Mg(2+) serves as cofactor. Mn(2+) is required as a cofactor. It depends on Ca(2+) as a cofactor.

It is found in the nucleus. The enzyme catalyses ATP-dependent breakage, passage and rejoining of double-stranded DNA.. In terms of biological role, control of topological states of DNA by transient breakage and subsequent rejoining of DNA strands. Topoisomerase II makes double-strand breaks. The chain is DNA topoisomerase 2 (TOP2) from Bombyx mori (Silk moth).